The chain runs to 159 residues: Small ribosomal subunit protein uS7c (159 aa).

The segment at 137–159 (HAIRKKEETHKMAESNRAXAHYR) is disordered. The segment covering 141–150 (KKEETHKMAE) has biased composition (basic and acidic residues).

Belongs to the universal ribosomal protein uS7 family. As to quaternary structure, part of the 30S ribosomal subunit.

It is found in the plastid. Its subcellular location is the chloroplast. One of the primary rRNA binding proteins, it binds directly to 16S rRNA where it nucleates assembly of the head domain of the 30S subunit. The protein is Small ribosomal subunit protein uS7c (rps7) of Sciadopitys verticillata (Japanese umbrella-pine).